Reading from the N-terminus, the 445-residue chain is Methionine aminopeptidase 2 (445 aa).

The interval 1–80 (MAAQVASGVG…TSKVQTEPPR (80 aa)) is disordered. Over residues 57–71 (AKKKKKKTKKKKKGT) the composition is skewed to basic residues. A substrate-binding site is contributed by H195. Residues D215, D226, and H295 each contribute to the a divalent metal cation site. A substrate-binding site is contributed by H303. 2 residues coordinate a divalent metal cation: E331 and E426.

This sequence belongs to the peptidase M24A family. Methionine aminopeptidase eukaryotic type 2 subfamily. The cofactor is Co(2+). It depends on Zn(2+) as a cofactor. Mn(2+) is required as a cofactor. Requires Fe(2+) as cofactor.

It is found in the cytoplasm. The catalysed reaction is Release of N-terminal amino acids, preferentially methionine, from peptides and arylamides.. In terms of biological role, cotranslationally removes the N-terminal methionine from nascent proteins. The N-terminal methionine is often cleaved when the second residue in the primary sequence is small and uncharged (Met-Ala-, Cys, Gly, Pro, Ser, Thr, or Val). This is Methionine aminopeptidase 2 from Paracoccidioides brasiliensis (strain Pb18).